We begin with the raw amino-acid sequence, 412 residues long: Zinc finger protein 821 (412 aa).

The disordered stretch occupies residues 26 to 83 (RQAMMKTDFPGDLGSQRQAIQQLRDQDSSSSDSEGDEEETTQDEVSSHTSEEDGGVVK). Acidic residues predominate over residues 58-67 (SEGDEEETTQ). 2 C2H2-type zinc fingers span residues 116 to 140 (GLCQ…VYQH) and 150 to 172 (YMCP…LLIH). A coiled-coil region spans residues 257 to 366 (KWALRRQNEP…EKMDMMLRAQ (110 aa)). A disordered region spans residues 278 to 319 (RTAKKSRRDNETPEEREVRRMRDREAKRLQRMQETDEQRARR).

The protein belongs to the krueppel C2H2-type zinc-finger protein family.

The protein resides in the nucleus. May be involved in transcriptional regulation. The sequence is that of Zinc finger protein 821 (ZNF821) from Bos taurus (Bovine).